A 204-amino-acid chain; its full sequence is Small ribosomal subunit protein uS7 (204 aa).

Met-1 carries the N-acetylmethionine modification. At Thr-2 the chain carries N-acetylthreonine; in 40S ribosomal protein S5, N-terminally processed. A Phosphothreonine modification is found at Thr-14. An N6-acetyllysine; alternate modification is found at Lys-47. A Glycyl lysine isopeptide (Lys-Gly) (interchain with G-Cter in SUMO2); alternate cross-link involves residue Lys-47. Ser-142 carries the phosphoserine modification.

Belongs to the universal ribosomal protein uS7 family. Component of the small ribosomal subunit. Part of the small subunit (SSU) processome, composed of more than 70 proteins and the RNA chaperone small nucleolar RNA (snoRNA) U3.

It is found in the cytoplasm. It localises to the nucleus. The protein resides in the nucleolus. Functionally, component of the small ribosomal subunit. The ribosome is a large ribonucleoprotein complex responsible for the synthesis of proteins in the cell. Part of the small subunit (SSU) processome, first precursor of the small eukaryotic ribosomal subunit. During the assembly of the SSU processome in the nucleolus, many ribosome biogenesis factors, an RNA chaperone and ribosomal proteins associate with the nascent pre-rRNA and work in concert to generate RNA folding, modifications, rearrangements and cleavage as well as targeted degradation of pre-ribosomal RNA by the RNA exosome. This Mus musculus (Mouse) protein is Small ribosomal subunit protein uS7 (Rps5).